Consider the following 519-residue polypeptide: RxLR effector protein PITG_15278 (519 aa).

Positions 1–24 (MHFIYRVVLVLAAFALFKVDSISA) are cleaved as a signal peptide. The RxLR-dEER signature appears at 49–59 (RQLRVMDDNER).

Belongs to the RxLR effector family.

It localises to the secreted. Its subcellular location is the host cytoplasm. Functionally, effector that enhances P.infestans colonization of Nicotiana benthamiana leaves. In Phytophthora infestans (strain T30-4) (Potato late blight agent), this protein is RxLR effector protein PITG_15278.